A 625-amino-acid polypeptide reads, in one-letter code: Chaperone protein HtpG (625 aa).

The a; substrate-binding stretch occupies residues 1 to 341; it reads MERKEFKAES…SEDLSLNISR (341 aa). A b region spans residues 342 to 551; it reads EMLQHDRQLK…EGEVSIEMEK (210 aa). The c stretch occupies residues 552–625; the sequence is VLRAMPDNQN…FSNDICKVMA (74 aa).

The protein belongs to the heat shock protein 90 family. Homodimer.

It is found in the cytoplasm. Functionally, molecular chaperone. Has ATPase activity. This Halalkalibacterium halodurans (strain ATCC BAA-125 / DSM 18197 / FERM 7344 / JCM 9153 / C-125) (Bacillus halodurans) protein is Chaperone protein HtpG.